A 33-amino-acid polypeptide reads, in one-letter code: Cytochrome b6-f complex subunit 5 (33 aa).

Residues 5–25 traverse the membrane as a helical segment; sequence LLFGIILGLISCVLAGLFVSA.

This sequence belongs to the PetG family. In terms of assembly, the 4 large subunits of the cytochrome b6-f complex are cytochrome b6, subunit IV (17 kDa polypeptide, PetD), cytochrome f and the Rieske protein, while the 4 small subunits are PetG, PetL, PetM and PetN. The complex functions as a dimer.

It localises to the plastid. It is found in the chloroplast thylakoid membrane. In terms of biological role, component of the cytochrome b6-f complex, which mediates electron transfer between photosystem II (PSII) and photosystem I (PSI), cyclic electron flow around PSI, and state transitions. PetG is required for either the stability or assembly of the cytochrome b6-f complex. This Bigelowiella natans (Pedinomonas minutissima) protein is Cytochrome b6-f complex subunit 5.